A 385-amino-acid chain; its full sequence is 1-deoxy-D-xylulose 5-phosphate reductoisomerase (385 aa).

Residues Thr-10, Gly-11, Ser-12, Ile-13, and Asn-124 each contribute to the NADPH site. Residue Lys-125 participates in 1-deoxy-D-xylulose 5-phosphate binding. Glu-126 contributes to the NADPH binding site. Asp-150 serves as a coordination point for Mn(2+). 1-deoxy-D-xylulose 5-phosphate-binding residues include Ser-151, Glu-152, Ser-176, and His-199. Residue Glu-152 participates in Mn(2+) binding. Gly-205 contacts NADPH. 1-deoxy-D-xylulose 5-phosphate is bound by residues Ser-212, Asn-217, Lys-218, and Glu-221. A Mn(2+)-binding site is contributed by Glu-221.

It belongs to the DXR family. Mg(2+) serves as cofactor. Mn(2+) is required as a cofactor.

It carries out the reaction 2-C-methyl-D-erythritol 4-phosphate + NADP(+) = 1-deoxy-D-xylulose 5-phosphate + NADPH + H(+). The protein operates within isoprenoid biosynthesis; isopentenyl diphosphate biosynthesis via DXP pathway; isopentenyl diphosphate from 1-deoxy-D-xylulose 5-phosphate: step 1/6. Catalyzes the NADPH-dependent rearrangement and reduction of 1-deoxy-D-xylulose-5-phosphate (DXP) to 2-C-methyl-D-erythritol 4-phosphate (MEP). In Clostridium botulinum (strain Eklund 17B / Type B), this protein is 1-deoxy-D-xylulose 5-phosphate reductoisomerase.